The chain runs to 160 residues: Ribosomal RNA large subunit methyltransferase H (160 aa).

Residues Leu-76, Gly-108, and 127 to 132 (FGALTW) contribute to the S-adenosyl-L-methionine site.

It belongs to the RNA methyltransferase RlmH family. Homodimer.

It localises to the cytoplasm. The catalysed reaction is pseudouridine(1915) in 23S rRNA + S-adenosyl-L-methionine = N(3)-methylpseudouridine(1915) in 23S rRNA + S-adenosyl-L-homocysteine + H(+). In terms of biological role, specifically methylates the pseudouridine at position 1915 (m3Psi1915) in 23S rRNA. The polypeptide is Ribosomal RNA large subunit methyltransferase H (Mesorhizobium japonicum (strain LMG 29417 / CECT 9101 / MAFF 303099) (Mesorhizobium loti (strain MAFF 303099))).